Reading from the N-terminus, the 406-residue chain is GTPase Obg (406 aa).

The 159-residue stretch at M1 to L159 folds into the Obg domain. The tract at residues N127–E148 is disordered. Over residues R129 to P143 the composition is skewed to polar residues. The region spanning A160–D334 is the OBG-type G domain. GTP contacts are provided by residues G166–S173, F191–V195, D213–G216, N283–D286, and S315–L317. The Mg(2+) site is built by S173 and T193. A disordered region spans residues A382–P406. Positions V385–G399 are enriched in acidic residues.

Belongs to the TRAFAC class OBG-HflX-like GTPase superfamily. OBG GTPase family. As to quaternary structure, monomer. Mg(2+) serves as cofactor.

Its subcellular location is the cytoplasm. Functionally, an essential GTPase which binds GTP, GDP and possibly (p)ppGpp with moderate affinity, with high nucleotide exchange rates and a fairly low GTP hydrolysis rate. Plays a role in control of the cell cycle, stress response, ribosome biogenesis and in those bacteria that undergo differentiation, in morphogenesis control. This chain is GTPase Obg, found in Pseudomonas aeruginosa (strain LESB58).